We begin with the raw amino-acid sequence, 240 residues long: MRCCGVCAFDAARGPRRLMRVGLALILVGHVNLLVGAVLHGTVLRHVANPRGAVTPEYTTANVISVGSGLLSVSVGLVALLASRNLLRPRLHWALLTLALVNLLLSAACSMGLLLAVSLTVANGGRRLIADCHPGLMDPSIPLDQGPGHTDCSFDPTRIYDTALALWIPSLFMSAAEAALSGYCCVAALTLRGIGPCRKEGLQEQLQELTELELPECKRQENVQLLHGRQDFQALQKTWV.

The next 4 helical transmembrane spans lie at 21-41, 63-83, 95-115, and 163-183; these read VGLA…VLHG, VISV…LLAS, LLTL…GLLL, and ALAL…LSGY.

This sequence belongs to the TMEM54 family.

It localises to the membrane. The protein is Keratinocyte-associated protein 3 (Krtcap3) of Mus musculus (Mouse).